The chain runs to 89 residues: Small ribosomal subunit protein uS17 (89 aa).

It belongs to the universal ribosomal protein uS17 family. In terms of assembly, part of the 30S ribosomal subunit.

Functionally, one of the primary rRNA binding proteins, it binds specifically to the 5'-end of 16S ribosomal RNA. The sequence is that of Small ribosomal subunit protein uS17 from Azoarcus sp. (strain BH72).